Consider the following 845-residue polypeptide: Extended synaptotagmin-2 (845 aa).

A compositionally biased stretch (gly residues) spans 1 to 17; it reads MSSAGGEGPEAGPGRAG. Positions 1 to 26 are disordered; that stretch reads MSSAGGEGPEAGPGRAGGRSEPEAPG. Topologically, residues 1 to 27 are cytoplasmic; that stretch reads MSSAGGEGPEAGPGRAGGRSEPEAPGS. A helical membrane pass occupies residues 28–48; sequence ALSVDLPGLLGQLARSFALLL. Residues 49-51 are Lumenal-facing; that stretch reads PVY. Residues 52 to 72 traverse the membrane as a helical segment; that stretch reads ALGYLGLSFSWVLLALGLLAW. Residues 73 to 845 are Cytoplasmic-facing; that stretch reads CRRSRGLKAS…EDGTRPQVIT (773 aa). An SMP-LTD domain is found at 115 to 294; the sequence is DTERAEWLNK…LPNRITVPLV (180 aa). 2 consecutive C2 domains span residues 293–413 and 442–563; these read LVSE…DEWF and VLAD…QLSN. Ca(2+) contacts are provided by lysine 324, aspartate 325, aspartate 337, aspartate 384, glutamate 385, aspartate 386, aspartate 388, aspartate 390, and aspartate 391. Positions 584 to 664 are disordered; the sequence is QERPPDYQHS…RDLGRSSSSL (81 aa). Polar residues predominate over residues 612-628; it reads SQMSASPGTGGANTAPS. A phosphoserine mark is found at serine 615 and serine 617. Threonine 629 bears the Phosphothreonine mark. Residues 634-645 are compositionally biased toward basic and acidic residues; the sequence is VDDKPAMEEKPQ. 7 positions are modified to phosphoserine: serine 660, serine 662, serine 663, serine 667, serine 679, serine 682, and serine 685. Residues 710–832 enclose the C2 3 domain; that stretch reads PLGQIQLTIR…ELAKGWTQWY (123 aa). The required for phosphatidylinositol 4,5-bisphosphate-dependent location at the cell membrane stretch occupies residues 757–764; the sequence is KRRSGRRK.

This sequence belongs to the extended synaptotagmin family. Homodimer. Interacts with ESYT1 and ESYT3. Interacts with FGFR1 that has been activated by FGF1 binding. Interacts with the AP-2 complex; identified in a complex with the AP-2 complex and FGFR1.

The protein localises to the cell membrane. The protein resides in the endoplasmic reticulum membrane. In terms of biological role, tethers the endoplasmic reticulum to the cell membrane and promotes the formation of appositions between the endoplasmic reticulum and the cell membrane. Binds glycerophospholipids in a barrel-like domain and may play a role in cellular lipid transport. Plays a role in FGF signaling via its role in the rapid internalization of FGFR1 that has been activated by FGF1 binding; this occurs most likely via the AP-2 complex. Promotes the localization of SACM1L at endoplasmic reticulum-plasma membrane contact sites (EPCS). The chain is Extended synaptotagmin-2 (Esyt2) from Mus musculus (Mouse).